Here is a 699-residue protein sequence, read N- to C-terminus: Telomere elongation protein EST1 (699 aa).

The disordered stretch occupies residues 641–663 (KKLSPLPEKDGVSSELVKHAASR). Over residues 647–658 (PEKDGVSSELVK) the composition is skewed to basic and acidic residues.

This sequence belongs to the EST1 family. In terms of assembly, interacts with CDC13 and MPS3.

Its subcellular location is the nucleus. It localises to the chromosome. The protein localises to the telomere. In terms of biological role, directly involved in telomere replication. Associates with telomerase and during its interaction with CDC13, telomerase activity is promoted. The polypeptide is Telomere elongation protein EST1 (EST1) (Saccharomyces cerevisiae (strain ATCC 204508 / S288c) (Baker's yeast)).